We begin with the raw amino-acid sequence, 99 residues long: Small integral membrane protein 14 (99 aa).

Topologically, residues 1 to 49 (MAEGGFDPCECVCSHEHAMRRLINLLRQSQSYCTDTECLQELPGPSGDN) are lumenal. A helical transmembrane segment spans residues 50–70 (GISVTMILVAWMVIALILFLL). Residues 71–99 (RPPNLRGSSLPGKPTSPHNGQDPPAPPVD) lie on the Cytoplasmic side of the membrane. The tract at residues 78 to 99 (SSLPGKPTSPHNGQDPPAPPVD) is disordered.

The protein resides in the endoplasmic reticulum membrane. The polypeptide is Small integral membrane protein 14 (SMIM14) (Homo sapiens (Human)).